Consider the following 816-residue polypeptide: Transducer protein Htr18 (816 aa).

A run of 2 helical transmembrane segments spans residues 21–41 (VVIV…TQAV) and 282–302 (NIVV…LVIG). Positions 303 to 356 (RDALTALTDMSDRAEAIAAGDIDTAIEETTRIDEVGDLRRSFRDIQEYLQTVAG) constitute an HAMP 1 domain. The disordered stretch occupies residues 399–425 (DAQETAEQSRKEAEQSREEAEALAAAL). Residues 405–418 (EQSRKEAEQSREEA) show a composition bias toward basic and acidic residues. The region spanning 423 to 476 (AALESQAQDIRETVEHAADGDLTQRLETDTDHESMAAIATALNSLLEELEGTIH) is the HAMP 2 domain. The 237-residue stretch at 495–731 (SAEEVKRASG…EVVTMVDEVG (237 aa)) folds into the Methyl-accepting transducer domain. A disordered region spans residues 790-816 (GGAENTTGAFVRSASTDHSRDATHHDT). Positions 793–803 (ENTTGAFVRSA) are enriched in polar residues. Over residues 804–816 (STDHSRDATHHDT) the composition is skewed to basic and acidic residues.

The protein belongs to the methyl-accepting chemotaxis (MCP) protein family. Post-translationally, methylated by CheR.

The protein localises to the cell membrane. Potentially involved in chemo- or phototactic signal transduction. This chain is Transducer protein Htr18 (htr18), found in Halobacterium salinarum (strain ATCC 29341 / DSM 671 / R1).